A 288-amino-acid chain; its full sequence is Quinate/shikimate dehydrogenase (288 aa).

Residues Lys-71 and Asp-107 each contribute to the substrate site. NAD(+) contacts are provided by residues 132–135, 155–158, Lys-205, 232–235, and Gly-255; these read AGGA, NRRD, and CVYN.

Belongs to the shikimate dehydrogenase family. In terms of assembly, homodimer.

The enzyme catalyses L-quinate + NAD(+) = 3-dehydroquinate + NADH + H(+). It catalyses the reaction L-quinate + NADP(+) = 3-dehydroquinate + NADPH + H(+). It carries out the reaction shikimate + NADP(+) = 3-dehydroshikimate + NADPH + H(+). The catalysed reaction is shikimate + NAD(+) = 3-dehydroshikimate + NADH + H(+). It participates in metabolic intermediate biosynthesis; chorismate biosynthesis; chorismate from D-erythrose 4-phosphate and phosphoenolpyruvate: step 4/7. In terms of biological role, the actual biological function of YdiB remains unclear, nor is it known whether 3-dehydroshikimate or quinate represents the natural substrate. Catalyzes the reversible NAD-dependent reduction of both 3-dehydroshikimate (DHSA) and 3-dehydroquinate to yield shikimate (SA) and quinate, respectively. It can use both NAD or NADP for catalysis, however it has higher catalytic efficiency with NAD. This Escherichia coli O157:H7 protein is Quinate/shikimate dehydrogenase.